The primary structure comprises 106 residues: CRISPR-associated endoribonuclease Cas2 (106 aa).

Aspartate 8 contacts Mg(2+). The disordered stretch occupies residues glutamate 86–glycine 106.

It belongs to the CRISPR-associated endoribonuclease Cas2 protein family. As to quaternary structure, homodimer, forms a heterotetramer with a Cas1 homodimer. Mg(2+) is required as a cofactor.

CRISPR (clustered regularly interspaced short palindromic repeat), is an adaptive immune system that provides protection against mobile genetic elements (viruses, transposable elements and conjugative plasmids). CRISPR clusters contain sequences complementary to antecedent mobile elements and target invading nucleic acids. CRISPR clusters are transcribed and processed into CRISPR RNA (crRNA). Functions as a ssRNA-specific endoribonuclease. Involved in the integration of spacer DNA into the CRISPR cassette. The sequence is that of CRISPR-associated endoribonuclease Cas2 from Desulforudis audaxviator (strain MP104C).